A 471-amino-acid polypeptide reads, in one-letter code: V-type ATP synthase beta chain (471 aa).

This sequence belongs to the ATPase alpha/beta chains family.

In terms of biological role, produces ATP from ADP in the presence of a proton gradient across the membrane. The V-type beta chain is a regulatory subunit. The sequence is that of V-type ATP synthase beta chain from Streptococcus pyogenes serotype M18 (strain MGAS8232).